Here is a 645-residue protein sequence, read N- to C-terminus: 1,4-alpha-glucan branching enzyme GlgB (645 aa).

The Nucleophile role is filled by D309. The active-site Proton donor is E352. The segment at 619 to 645 (VKTRKGSKKQDGSKTKVRSNVTSRGKR) is disordered. Over residues 636-645 (RSNVTSRGKR) the composition is skewed to polar residues.

Belongs to the glycosyl hydrolase 13 family. GlgB subfamily. As to quaternary structure, monomer.

It carries out the reaction Transfers a segment of a (1-&gt;4)-alpha-D-glucan chain to a primary hydroxy group in a similar glucan chain.. Its pathway is glycan biosynthesis; glycogen biosynthesis. Catalyzes the formation of the alpha-1,6-glucosidic linkages in glycogen by scission of a 1,4-alpha-linked oligosaccharide from growing alpha-1,4-glucan chains and the subsequent attachment of the oligosaccharide to the alpha-1,6 position. The sequence is that of 1,4-alpha-glucan branching enzyme GlgB from Bacillus anthracis (strain CDC 684 / NRRL 3495).